A 905-amino-acid chain; its full sequence is MYKLNVISLIILTTYTGATYASARDLPQGSSVVVGEANVSTIGNKMTIDQKTPTTQIDWHSFDIGQNKEVEFKQPDANSVAYNRVTGGNASQIQGKLTANGKVYLANPNGVIITQGAEINVAGLFATTKDLERISENGNGNGNKFTRKLKDGQVVKEGQVINKGKIKAKDFVVLNGDKVINEGEIDATNNGKVYLSSGYNFTFTLSDSSISVALEDNAVQSIVQNEGIIKAGDITLNAKGRNQALDSLVMNNGVLEATKVSNKNGKVVLSADDVQLNNKSDIKGESEVVFTNEPKNKIKITSQTGSKVTSPKINFTGKSVNINGDFGRDDSKAHYNEEHKRLDTEVNIDVPDNENIRIAEKDNTGTGTGTDSFIQTGALSSLLANNGKVNLKGKDVNISGRIHIDSFRGSDSLLKLTNQGHIKINHADIHSTGRLFFITSLQNEKDSQSDITITDSKINLGNGAMGLGRSLDKENCDNQRWCRTETSQRKKFDVHMRNVVFDQVDDVVVAGGFKKVNLDNIVATGKTNFYIDGGVSRNNSRYEYGVLDLDKRTLLSELDQRRRRWKYYNDLDLDMNKAYWHRFDMFATKNTGRSTIKDTEINISNSKINLKNGFVHLLAEKIKLDNSKIDITFDKDNSQDISTQINRLGMNGKVSMVNSHIKIVGDEKSDISAKAPYATMFLIGELIGEKSSIFVKSHQGYTFRTDGDTKIAGKNSKDDLKITAINTGGRTGKEVIINGAPGSIDNDANIANMAFTIGDNANTKTTIENADITALAPNGGTAYLSSKGVEIEVNPNSNFTFFELPREKNFNQTKIKGDSTKLSERGFARLYDKINGVRASNLSAEQLNVTDASEKIINTKLVSSLDVEKLVSVAVCDAGKGCEEQQFGDKGNNTKVSVGELETEQ.

Residues 1–21 (MYKLNVISLIILTTYTGATYA) form the signal peptide.

It is found in the secreted. Functionally, binds heme/hemopexin complexes. This chain is Heme/hemopexin-binding protein (hxuA), found in Haemophilus influenzae (strain ATCC 51907 / DSM 11121 / KW20 / Rd).